Consider the following 225-residue polypeptide: Uridylate kinase (225 aa).

9-10 (GS) serves as a coordination point for ATP. Residue Gly44 coordinates UMP. Residues Gly45 and Arg49 each coordinate ATP. Residues Asp66 and 114–120 (THPGHTT) each bind UMP. Thr140, Asn141, Tyr146, and Asp149 together coordinate ATP.

It belongs to the UMP kinase family. As to quaternary structure, homohexamer.

It is found in the cytoplasm. The enzyme catalyses UMP + ATP = UDP + ADP. Its pathway is pyrimidine metabolism; CTP biosynthesis via de novo pathway; UDP from UMP (UMPK route): step 1/1. Inhibited by UTP. Catalyzes the reversible phosphorylation of UMP to UDP. The polypeptide is Uridylate kinase (Pyrococcus abyssi (strain GE5 / Orsay)).